A 517-amino-acid polypeptide reads, in one-letter code: Acyltransferase AFT15-1 (517 aa).

The Proton acceptor role is filled by H180.

This sequence belongs to the plant acyltransferase family.

The protein operates within mycotoxin biosynthesis. Functionally, acyltransferase; part of the gene clusters that mediate the biosynthesis of the host-selective toxins (HSTs) AF-toxins responsible for Alternaria black spot of strawberry disease by the strawberry pathotype. AF-toxin I and III are valine derivatives of 2,3-dyhydroxy-isovaleric acid and 2-hydroxy-isovaleric acid respectively, while AF II is an isoleucine derivative of 2-hydroxy-valeric acid. These derivatives are bound to a 9,10-epoxy-8-hydroxy-9-methyl-decatrienoic acid (EDA) moiety. On cellular level, AF-toxins affect plasma membrane of susceptible cells and cause a sudden increase in loss of K(+) after a few minutes of toxin treatment. The aldo-keto reductase AFTS1 catalyzes the conversion of 2-keto-isovaleric acid (2-KIV) to 2-hydroxy-isovaleric acid (2-HIV) by reduction of its ketone to an alcohol. The acyl-CoA ligase AFT1, the hydrolase AFT2 and the enoyl-CoA hydratases AFT3 and AFT6, but also the polyketide synthase AFT9, the acyl-CoA dehydrogenase AFT10, the cytochrome P450 monooxygenase AFT11 and the oxidoreductase AFT12 are all involved in the biosynthesis of the AK-, AF- and ACT-toxin common EDA structural moiety. The exact function of each enzyme, and of additional enzymes identified within the AF-toxin clusters have still to be determined. The chain is Acyltransferase AFT15-1 (AFT15-1) from Alternaria alternata (Alternaria rot fungus).